A 590-amino-acid polypeptide reads, in one-letter code: Fucose-1-phosphate guanylyltransferase (590 aa).

In terms of tissue distribution, expressed at highest levels in brain, moderately in testis, ovary and kidney, and weakly in liver, spleen, heart and lung.

The protein localises to the cytoplasm. It catalyses the reaction beta-L-fucose 1-phosphate + GTP + H(+) = GDP-beta-L-fucose + diphosphate. In terms of biological role, catalyzes the formation of GDP-L-fucose from GTP and L-fucose-1-phosphate. Functions as a salvage pathway to reutilize L-fucose arising from the turnover of glycoproteins and glycolipids. This chain is Fucose-1-phosphate guanylyltransferase, found in Mus musculus (Mouse).